Here is a 422-residue protein sequence, read N- to C-terminus: Tyrosine--tRNA ligase (422 aa).

L-tyrosine is bound at residue Tyr-35. The short motif at 40–49 (PTAASLHVGH) is the 'HIGH' region element. Residues Tyr-169 and Gln-173 each coordinate L-tyrosine. Positions 229-233 (KFGKT) match the 'KMSKS' region motif. Residue Lys-232 participates in ATP binding. An S4 RNA-binding domain is found at 352–418 (VRLAQLFADT…GKKSLASVAV (67 aa)).

Belongs to the class-I aminoacyl-tRNA synthetase family. TyrS type 1 subfamily. In terms of assembly, homodimer.

The protein resides in the cytoplasm. The enzyme catalyses tRNA(Tyr) + L-tyrosine + ATP = L-tyrosyl-tRNA(Tyr) + AMP + diphosphate + H(+). Catalyzes the attachment of tyrosine to tRNA(Tyr) in a two-step reaction: tyrosine is first activated by ATP to form Tyr-AMP and then transferred to the acceptor end of tRNA(Tyr). This is Tyrosine--tRNA ligase from Kineococcus radiotolerans (strain ATCC BAA-149 / DSM 14245 / SRS30216).